We begin with the raw amino-acid sequence, 156 residues long: Small ribosomal subunit protein uS7 (156 aa).

This sequence belongs to the universal ribosomal protein uS7 family. As to quaternary structure, part of the 30S ribosomal subunit. Contacts proteins S9 and S11.

Its function is as follows. One of the primary rRNA binding proteins, it binds directly to 16S rRNA where it nucleates assembly of the head domain of the 30S subunit. Is located at the subunit interface close to the decoding center, probably blocks exit of the E-site tRNA. The protein is Small ribosomal subunit protein uS7 of Treponema denticola (strain ATCC 35405 / DSM 14222 / CIP 103919 / JCM 8153 / KCTC 15104).